The primary structure comprises 57 residues: UPF0391 membrane protein NE0130 (57 aa).

Transmembrane regions (helical) follow at residues 1-21 (MLKWAIIFAIISFISGVFGFR) and 33-53 (FLFFLFALITLVLLVLGLLGI).

The protein belongs to the UPF0391 family.

The protein localises to the cell membrane. The chain is UPF0391 membrane protein NE0130 from Nitrosomonas europaea (strain ATCC 19718 / CIP 103999 / KCTC 2705 / NBRC 14298).